An 847-amino-acid chain; its full sequence is Collagen alpha-1(I) chain (847 aa).

The disordered stretch occupies residues 1–847 (GPMGPSGPRG…PGPIGPPGPR (847 aa)). Low complexity predominate over residues 20 to 39 (PQGFQGPPGEPGEPGSSGPM). Positions 51 to 65 (NGDDGEAGKPGRPGE) are enriched in basic and acidic residues. Position 85 is a phosphoserine (serine 85). Low complexity-rich tracts occupy residues 93-109 (DAGP…PGEN) and 127-145 (PGAS…TGAA). A compositionally biased stretch (pro residues) spans 147-159 (PPGPTGPAGPPGF). Low complexity-rich tracts occupy residues 193–208 (AGAA…DGQP), 219–228 (QGPSGAPGPK), 298–314 (PKGI…DGKT), 334–343 (PGPKGAAGEP), 500–543 (PSGP…KGDA), 551–599 (PTGA…NAGA), and 628–638 (SPGADGPAGAP). Residue serine 501 is modified to Phosphoserine. Pro residues predominate over residues 685-695 (PPGPMGPPGIA). Positions 697-712 (PPGESGREGSPGAEGS) are enriched in low complexity. Residues 731 to 746 (SGPPGAPGAPGAPGPV) show a composition bias toward pro residues. Residues 763–777 (AGPAGARGPSGPQGP) are compositionally biased toward low complexity. The span at 778–789 (RGDKGETGEQGD) shows a compositional bias: basic and acidic residues. Residues 793-838 (SGIQGPPGAPGSPGEQGPSGASGPAGPRGPPGSAGSPGKDGINGIP) show a composition bias toward low complexity.

This sequence belongs to the fibrillar collagen family. In terms of assembly, trimers of one alpha 2(I) and two alpha 1(I) chains. Prolines at the third position of the tripeptide repeating unit (G-X-Y) are hydroxylated in some or all of the chains. In terms of tissue distribution, forms the fibrils of tendon, ligaments and bones. In bones, the fibrils are mineralized with calcium hydroxyapatite.

Its subcellular location is the secreted. The protein localises to the extracellular space. The protein resides in the extracellular matrix. Its function is as follows. Type I collagen is a member of group I collagen (fibrillar forming collagen). This Cyclopes didactylus (Silky anteater) protein is Collagen alpha-1(I) chain.